The primary structure comprises 350 residues: Ion-translocating oxidoreductase complex subunit D (350 aa).

The next 5 membrane-spanning stretches (helical) occupy residues 15–35 (QTQT…LAQT), 36–56 (WFFG…ALGA), 67–87 (PIKP…IGLS), 88–108 (LPPL…IIIA), and 122–142 (PAMV…TSWL). Threonine 186 bears the FMN phosphoryl threonine mark. 4 helical membrane passes run 213-233 (WGGI…LFLL), 242-262 (IPGA…LMTP), 264-284 (ATAT…AFFI), and 299-316 (LVYG…RRFG).

This sequence belongs to the NqrB/RnfD family. As to quaternary structure, the complex is composed of six subunits: RnfA, RnfB, RnfC, RnfD, RnfE and RnfG. FMN is required as a cofactor.

The protein localises to the cell inner membrane. In terms of biological role, part of a membrane-bound complex that couples electron transfer with translocation of ions across the membrane. The protein is Ion-translocating oxidoreductase complex subunit D of Aeromonas salmonicida (strain A449).